The chain runs to 340 residues: Flavonoid 7-O-methyltransferase 1 (340 aa).

S-adenosyl-L-methionine is bound at residue Asp-207. His-245 functions as the Proton acceptor in the catalytic mechanism.

This sequence belongs to the class I-like SAM-binding methyltransferase superfamily. Cation-independent O-methyltransferase family. Homodimer. As to expression, expressed in leaves.

The enzyme catalyses (2S)-naringenin + S-adenosyl-L-methionine = (2S)-sakuranetin + S-adenosyl-L-homocysteine + H(+). It catalyses the reaction scutellarein + S-adenosyl-L-methionine = scutellarein 7-methyl ether + S-adenosyl-L-homocysteine. The catalysed reaction is apigenin + S-adenosyl-L-methionine = genkwanin + S-adenosyl-L-homocysteine + H(+). It carries out the reaction luteolin + S-adenosyl-L-methionine = luteolin 7-methyl ether + S-adenosyl-L-homocysteine + H(+). The enzyme catalyses chrysoeriol + S-adenosyl-L-methionine = velutin + S-adenosyl-L-homocysteine. It catalyses the reaction diosmetin + S-adenosyl-L-methionine = luteolin 4',7-dimethyl ether + S-adenosyl-L-homocysteine. The catalysed reaction is acacetin + S-adenosyl-L-methionine = apigenin 4',7-dimethyl ether + S-adenosyl-L-homocysteine. It carries out the reaction scutellarein 4'-methyl ether + S-adenosyl-L-methionine = ladanein + S-adenosyl-L-homocysteine. It participates in flavonoid metabolism. Functionally, flavonoid 7-O-methyltransferase involved in the biosynthesis of polymethoxylated flavonoids natural products such as nevadensin and salvigenin, aroma compounds which contribute to the flavor of sweet basil, and exhibit pharmacological activities such as anti-allergic, anti-oxidant, antibacterial, anti-proliferative, and anti-inflammatory effects. Catalyzes S-adenosylmethionine-dependent regioselective 7-O-methylation of flavonoids; active on various hydroxylated flavonoid substrates, including apigenin (API) and luteolin (LUT), and, with a lower efficiency, scutellarein (SCU), naringenin (NAR), chrysoeriol (CHRYS), diosmetin (DIOS), acacetin (ACA) and scutellarein-7-methyl ether (SCU7Me). The sequence is that of Flavonoid 7-O-methyltransferase 1 from Ocimum basilicum (Sweet basil).